We begin with the raw amino-acid sequence, 303 residues long: Phytochrome-associated serine/threonine-protein phosphatase 1 (303 aa).

Asp50, His52, Asp78, and Asn110 together coordinate Zn(2+). Catalysis depends on His111, which acts as the Proton donor. Zn(2+) is bound by residues His160 and His234.

It belongs to the PPP phosphatase family. PP-6 (PP-V) subfamily. In terms of assembly, interacts with PHYA and PHYB, mostly when they are phosphorylated and in Pfr forms. Interacts with TAP46. Interacts with PIN1 and PIN2. Interacts with ABI5. Interacts with PIF3 and PIF4. Protein phosphatase 6 (PP6) holoenzyme is a heterotrimeric complex formed by the catalytic subunit FYPP, a SAPS domain-containing subunit (SAL) and a protein phosphatase 2A regulatory subunit A (PP2AA). Zn(2+) is required as a cofactor. In terms of tissue distribution, mostly expressed in flowers. Also detected to a lower extent in stems and leaves. Expressed in roots.

Its subcellular location is the cytoplasm. It carries out the reaction O-phospho-L-seryl-[protein] + H2O = L-seryl-[protein] + phosphate. The catalysed reaction is O-phospho-L-threonyl-[protein] + H2O = L-threonyl-[protein] + phosphate. Its function is as follows. Catalytic subunit of protein phosphatase 6 (PP6). Dephosphorylates phosphorylated phytochromes, with a preference toward Pfr forms. Plays a major role in the photoperiodic control of flowering time in long days by modulating phytochrome signals in flowering time control. Involved in the regulation of polar auxin transport in roots. Dephosphorylates directly the auxin efflux carriers PIN1 and PIN2, thus promoting their proper polar localization in root cell plasma membrane. Acts antagonistically with the protein kinase PID to regulate the reversible phosphorylation of PIN and polar targeting, subsequently impacting polar auxin transport and plant development. Involved in the regulation of abscisic acid (ABA) signaling during seed germination and postgermination seedling growth. Functions as a negative regulator of ABA signaling through direct dephosphorylation and destabilization of ABI5. Acts antagonistically with the protein kinase SRK2E/SNRK2.6 to regulate ABI5 phosphorylation and ABA responses. Involved in the regulation of phosphorylation status in hypocotyl phototropism. Involved in the negative regulation of photomorphogenesis by controlling the stability and transcriptional activity of PIF3 and PIF4 proteins in the dark, via the regulation of their phosphorylation status. This is Phytochrome-associated serine/threonine-protein phosphatase 1 from Arabidopsis thaliana (Mouse-ear cress).